The chain runs to 230 residues: Cytidylate kinase (230 aa).

11–19 contacts ATP; sequence GPAAAGKST.

Belongs to the cytidylate kinase family. Type 1 subfamily.

The protein localises to the cytoplasm. It catalyses the reaction CMP + ATP = CDP + ADP. The catalysed reaction is dCMP + ATP = dCDP + ADP. The chain is Cytidylate kinase from Oceanobacillus iheyensis (strain DSM 14371 / CIP 107618 / JCM 11309 / KCTC 3954 / HTE831).